The chain runs to 89 residues: Small ribosomal subunit protein uS15 (89 aa).

This sequence belongs to the universal ribosomal protein uS15 family. Part of the 30S ribosomal subunit. Forms a bridge to the 50S subunit in the 70S ribosome, contacting the 23S rRNA.

In terms of biological role, one of the primary rRNA binding proteins, it binds directly to 16S rRNA where it helps nucleate assembly of the platform of the 30S subunit by binding and bridging several RNA helices of the 16S rRNA. Its function is as follows. Forms an intersubunit bridge (bridge B4) with the 23S rRNA of the 50S subunit in the ribosome. This is Small ribosomal subunit protein uS15 from Bradyrhizobium sp. (strain ORS 278).